A 303-amino-acid chain; its full sequence is Indole-3-glycerol phosphate synthase (303 aa).

The protein belongs to the TrpC family.

The catalysed reaction is 1-(2-carboxyphenylamino)-1-deoxy-D-ribulose 5-phosphate + H(+) = (1S,2R)-1-C-(indol-3-yl)glycerol 3-phosphate + CO2 + H2O. It participates in amino-acid biosynthesis; L-tryptophan biosynthesis; L-tryptophan from chorismate: step 4/5. This is Indole-3-glycerol phosphate synthase from Acaryochloris marina (strain MBIC 11017).